The primary structure comprises 274 residues: Tryptophan synthase alpha chain (274 aa).

Residues Glu49 and Asp60 each act as proton acceptor in the active site.

Belongs to the TrpA family. As to quaternary structure, tetramer of two alpha and two beta chains.

It catalyses the reaction (1S,2R)-1-C-(indol-3-yl)glycerol 3-phosphate + L-serine = D-glyceraldehyde 3-phosphate + L-tryptophan + H2O. The protein operates within amino-acid biosynthesis; L-tryptophan biosynthesis; L-tryptophan from chorismate: step 5/5. Functionally, the alpha subunit is responsible for the aldol cleavage of indoleglycerol phosphate to indole and glyceraldehyde 3-phosphate. This chain is Tryptophan synthase alpha chain, found in Zymomonas mobilis subsp. mobilis (strain ATCC 31821 / ZM4 / CP4).